We begin with the raw amino-acid sequence, 1517 residues long: Neurite extension and migration factor (1517 aa).

A compositionally biased stretch (basic and acidic residues) spans 381-405 (DKKKGKEEVHEDKSIEKKDEKDNGE). Disordered regions lie at residues 381-416 (DKKKGKEEVHEDKSIEKKDEKDNGEKPALNNKPCSG), 505-529 (VNERKEWPPGGSKEEDDDEWCPKKR), 644-697 (SMEA…GLIG), 732-775 (KKIK…HMSE), 1065-1084 (RHSSLSEMSPPDTPSLSPQS), 1161-1228 (DEPA…KKGK), and 1372-1422 (AGTP…SSED). A compositionally biased stretch (polar residues) spans 644 to 663 (SMEASASSKQVSFGSDQKQA). Residues 678 to 687 (SALLAAPSSA) are compositionally biased toward low complexity. A compositionally biased stretch (polar residues) spans 764-773 (TPGTSNSSHM).

It localises to the nucleus. It is found in the cytoplasm. Functionally, involved in neurite outgrowth by regulating cell-cell adhesion via the N-cadherin signaling pathway. May act by regulating expression of protein-coding genes, such as N-cadherins and integrin beta-1 (ITGB1). This Rattus norvegicus (Rat) protein is Neurite extension and migration factor.